The following is a 322-amino-acid chain: 26S proteasome non-ATPase regulatory subunit 7 (322 aa).

In terms of domain architecture, MPN spans 9-144 (VVVHPLVLLS…TEAYISVEEV (136 aa)). K180 is covalently cross-linked (Glycyl lysine isopeptide (Lys-Gly) (interchain with G-Cter in ubiquitin)). N6-acetyllysine is present on residues K204, K214, K314, and K315. Positions 281-322 (ANRDAEKKEGQEKEDSKKDRKDDKEKEKEKSDVKKEEKKEKK) are disordered.

Belongs to the peptidase M67A family. Component of the 19S proteasome regulatory particle complex. The 26S proteasome consists of a 20S core particle (CP) and two 19S regulatory subunits (RP). The regulatory particle is made of a lid composed of 9 subunits including PSMD7, a base containing 6 ATPases and few additional components. Within the complex, PSMD7 interacts with subunit PSMD4 through their respective MPN domain. Interacts with TRIM5.

Component of the 26S proteasome, a multiprotein complex involved in the ATP-dependent degradation of ubiquitinated proteins. This complex plays a key role in the maintenance of protein homeostasis by removing misfolded or damaged proteins, which could impair cellular functions, and by removing proteins whose functions are no longer required. Therefore, the proteasome participates in numerous cellular processes, including cell cycle progression, apoptosis, or DNA damage repair. In Bos taurus (Bovine), this protein is 26S proteasome non-ATPase regulatory subunit 7 (PSMD7).